Here is a 202-residue protein sequence, read N- to C-terminus: Ribonuclease HII (202 aa).

In terms of domain architecture, RNase H type-2 spans 18–202 (GQYAGVDEVG…KSFRPVREAM (185 aa)). Residues aspartate 24, glutamate 25, and aspartate 116 each contribute to the a divalent metal cation site.

This sequence belongs to the RNase HII family. The cofactor is Mn(2+). Requires Mg(2+) as cofactor.

It localises to the cytoplasm. The catalysed reaction is Endonucleolytic cleavage to 5'-phosphomonoester.. Its function is as follows. Endonuclease that specifically degrades the RNA of RNA-DNA hybrids. The chain is Ribonuclease HII from Shewanella piezotolerans (strain WP3 / JCM 13877).